We begin with the raw amino-acid sequence, 4243 residues long: Fibrocystin-L (4243 aa).

The first 20 residues, 1–20, serve as a signal peptide directing secretion; the sequence is MGHLWLLGIWGLCGLLLCAA. The Extracellular segment spans residues 21–4210; the sequence is DPSTDGSQII…KASTVGTYAQ (4190 aa). 3 consecutive IPT/TIG domains span residues 31–129, 146–255, and 270–361; these read PKVT…TCKG, PTIR…KMAY, and AEVT…ILEY. A glycan (O-linked (GalNAc...) threonine) is linked at Thr122. The PA14 domain occupies 337–492; sequence PGGRGLKLEV…NVYTEQQTGD (156 aa). Thr445 is a glycosylation site (O-linked (GalNAc...) threonine). IPT/TIG domains lie at 1067–1151, 1155–1234, 1240–1322, 1330–1469, 1566–1649, 1659–1743, 1749–1828, 1831–1910, 1916–1997, 1999–2085, and 2091–2176; these read PLVL…EFYF, SQIS…AFSY, PIIT…RDKL, LEVT…SFSY, PSIS…TLSN, PNID…TFSY, PYIT…NLTV, PPVA…LFTY, PFLR…VFEY, LNIQ…PFTY, and PLIT…DFLY. 2 O-linked (GalNAc...) threonine glycosylation sites follow: Thr1803 and Thr1839. In terms of domain architecture, G8 1 spans 2184 to 2304; sequence FSWGGKSPPE…VPVTWTRLAH (121 aa). Thr2320 carries O-linked (GalNAc...) threonine glycosylation. PbH1 repeat units follow at residues 2508 to 2530, 2566 to 2588, 2665 to 2687, and 2733 to 2756; these read THHL…FIED, NPNN…WYRM, GGAL…ETKR, and SEGL…ALGV. The 139-residue stretch at 3036–3174 folds into the G8 2 domain; it reads SFWQSSRENN…HSIYKTKLSE (139 aa). PbH1 repeat units follow at residues 3293–3315, 3355–3377, 3416–3438, 3471–3493, and 3527–3548; these read KGNA…RDST, TDGL…RIWG, GTNT…RIDG, PGCS…YFQT, and SKNV…NCSD. O-linked (GalNAc...) threonine glycosylation occurs at Thr3736. The chain crosses the membrane as a helical span at residues 4211–4231; that stretch reads IMTVVISCLVGRMWLLEIFMA. Over 4232–4243 the chain is Cytoplasmic; that stretch reads AVSTLNITLRSY.

The protein resides in the membrane. The protein localises to the cell projection. It localises to the stereocilium membrane. Component of hair-cell stereocilia coat. Required for normal hearing. In Homo sapiens (Human), this protein is Fibrocystin-L (PKHD1L1).